Consider the following 495-residue polypeptide: Histidine--tRNA ligase (495 aa).

It belongs to the class-II aminoacyl-tRNA synthetase family. Homodimer.

It is found in the cytoplasm. It catalyses the reaction tRNA(His) + L-histidine + ATP = L-histidyl-tRNA(His) + AMP + diphosphate + H(+). The protein is Histidine--tRNA ligase of Ruegeria pomeroyi (strain ATCC 700808 / DSM 15171 / DSS-3) (Silicibacter pomeroyi).